We begin with the raw amino-acid sequence, 440 residues long: Serine/threonine-protein kinase STK11 (440 aa).

Residues 49–309 enclose the Protein kinase domain; the sequence is YLMGDLLGEG…IQQIRQHNWF (261 aa). ATP-binding positions include 55–63 and K78; that span reads LGEGSYGKV. Catalysis depends on D176, which acts as the Proton acceptor. T336 and T365 each carry phosphothreonine; by autocatalysis. The segment at 370 to 440 is disordered; it reads VPGQVPEEEA…IRKLSTCKQQ (71 aa). Residues 430-440 show a composition bias toward basic residues; that stretch reads KIRKLSTCKQQ. S435 is modified (phosphoserine; by PKA).

This sequence belongs to the protein kinase superfamily. CAMK Ser/Thr protein kinase family. LKB1 subfamily. Catalytic component of a trimeric complex composed of STK11/LKB1, STRAD (STRADA or STRADB) and CAB39/MO25 (CAB39/MO25alpha or CAB39L/MO25beta). The cofactor is Mg(2+). Mn(2+) is required as a cofactor. Ubiquitously expressed in all tissues tested. High levels were observed in duodenum and skeletal muscle, lower levels in liver and pancreas.

It is found in the nucleus. The protein resides in the cytoplasm. It catalyses the reaction L-seryl-[protein] + ATP = O-phospho-L-seryl-[protein] + ADP + H(+). The catalysed reaction is L-threonyl-[protein] + ATP = O-phospho-L-threonyl-[protein] + ADP + H(+). Functionally, tumor suppressor serine/threonine-protein kinase that controls the activity of AMP-activated protein kinase (AMPK) family members, thereby playing a role in various processes such as cell metabolism, cell polarity, apoptosis and DNA damage response. Acts by phosphorylating the T-loop of AMPK family proteins, leading to promote their activity. The chain is Serine/threonine-protein kinase STK11 from Gallus gallus (Chicken).